A 298-amino-acid polypeptide reads, in one-letter code: Oligodendrocyte transcription factor 2 (298 aa).

Positions 1-13 (MDSDASLVSSRPS) are enriched in polar residues. 2 disordered regions span residues 1–60 (MDSD…SAEL) and 79–102 (SSSS…MTEP). Residues 26–41 (NKGGGGGGGGGGGFTG) are compositionally biased toward gly residues. Over residues 79–91 (SSSSSASSASSAS) the composition is skewed to low complexity. Positions 106-160 (QLRLKINSRERKRMHDLNIAMDGLREVMPYAHGPSVRKLSKIATLLLARNYILML) constitute a bHLH domain.

The protein localises to the nucleus. In terms of biological role, required for oligodendrocyte and motor neuron specification in the spinal cord. This chain is Oligodendrocyte transcription factor 2 (OLIG2), found in Gallus gallus (Chicken).